The primary structure comprises 338 residues: Cytochrome P450 monooxygenase easK (338 aa).

Positions 1–16 (MLLLTFTLPVVTLLLA) are cleaved as a signal peptide. N-linked (GlcNAc...) asparagine glycans are attached at residues asparagine 240 and asparagine 327.

The protein belongs to the cytochrome P450 family. The cofactor is heme.

The protein operates within alkaloid biosynthesis; ergot alkaloid biosynthesis. In terms of biological role, cytochrome P450 monooxygenase; part of the gene cluster that mediates the biosynthesis of fumiclavanine C, a fungal ergot alkaloid. DmaW catalyzes the first step of ergot alkaloid biosynthesis by condensing dimethylallyl diphosphate (DMAP) and tryptophan to form 4-dimethylallyl-L-tryptophan. The second step is catalyzed by the methyltransferase easF that methylates 4-dimethylallyl-L-tryptophan in the presence of S-adenosyl-L-methionine, resulting in the formation of 4-dimethylallyl-L-abrine. The catalase easC and the FAD-dependent oxidoreductase easE then transform 4-dimethylallyl-L-abrine to chanoclavine-I which is further oxidized by EasD in the presence of NAD(+), resulting in the formation of chanoclavine-I aldehyde. EasA reduces chanoclavine-I aldehyde to dihydrochanoclavine-I aldehyde that spontaneously dehydrates to form 6,8-dimethyl-6,7-didehydroergoline. EasG then catalyzes the reduction of 6,8-dimethyl-6,7-didehydroergoline to form festuclavine. Hydrolysis of festuclavine by easM then leads to the formation of fumigaclavine B which is in turn acetylated by easN to fumigaclavine A. Finally, easL catalyzes the conversion of fumigaclavine A into fumigaclavine C by attaching a dimethylallyl moiety to C-2 of the indole nucleus. The role of the cytochrome P450 monooxygenase easK within the cluster has not been identified yet. This is Cytochrome P450 monooxygenase easK from Aspergillus fumigatus (strain ATCC MYA-4609 / CBS 101355 / FGSC A1100 / Af293) (Neosartorya fumigata).